A 293-amino-acid polypeptide reads, in one-letter code: Ribonuclease HIII (293 aa).

One can recognise an RNase H type-2 domain in the interval 78–293 (LPLIGTDEVG…TEKAKKRLER (216 aa)). Aspartate 84, glutamate 85, and aspartate 187 together coordinate a divalent metal cation.

Belongs to the RNase HII family. RnhC subfamily. Requires Mn(2+) as cofactor. Mg(2+) is required as a cofactor.

It localises to the cytoplasm. It catalyses the reaction Endonucleolytic cleavage to 5'-phosphomonoester.. In terms of biological role, endonuclease that specifically degrades the RNA of RNA-DNA hybrids. This chain is Ribonuclease HIII, found in Streptococcus pneumoniae (strain JJA).